The chain runs to 216 residues: Invasion protein InvF (216 aa).

Residues 112-210 (YWLVGYLLAQ…GVSPRKLSNI (99 aa)) form the HTH araC/xylS-type domain. 2 DNA-binding regions (H-T-H motif) span residues 129-150 (RMLG…SRAL) and 177-200 (ITQL…KELI).

In terms of biological role, transcriptional regulator required for the expression of several genes encoding type III secretion system SPI1 effector proteins. The interaction with SicA is necessary for the activation of sigDE (sopB pipC), sicAsipBCDA, and sopE. In Salmonella typhi, this protein is Invasion protein InvF (invF).